The sequence spans 73 residues: Heterin-2 (73 aa).

A signal peptide spans 1 to 22 (MQYKTFLVIFLAYLLVTEEALA). A propeptide spanning residues 47 to 73 (KRALKNIFDPYQKNLDLELERLLSQLQ) is cleaved from the precursor.

This sequence belongs to the non-disulfide-bridged peptide (NDBP) superfamily. Medium-length antimicrobial peptide (group 3) family. Expressed by the venom gland.

The protein resides in the secreted. Its subcellular location is the target cell membrane. In terms of biological role, amphipathic peptide with potent activities against Gram-positive bacteria (MIC=5.6-30.0 uM) and weaker activities against the tested Gram-negative bacteria (MIC=15 uM to &gt;45 uM). It has high hemolytic activity against human erythrocytes. May act by disrupting the integrity of the bacterial cell membrane. This Heterometrus spinifer (Asia giant forest scorpion) protein is Heterin-2.